Reading from the N-terminus, the 489-residue chain is Betaine aldehyde dehydrogenase (489 aa).

K(+)-binding residues include T26 and D93. 150–152 serves as a coordination point for NAD(+); it reads GAW. Catalysis depends on K162, which acts as the Charge relay system. Position 176-179 (176-179) interacts with NAD(+); that stretch reads KPSE. V180 lines the K(+) pocket. Position 229-232 (229-232) interacts with NAD(+); the sequence is GVET. L245 provides a ligand contact to K(+). Catalysis depends on E251, which acts as the Proton acceptor. NAD(+)-binding residues include G253, C285, and E386. Residue C285 is the Nucleophile of the active site. C285 bears the Cysteine sulfenic acid (-SOH) mark. Residues K456 and G459 each coordinate K(+). The active-site Charge relay system is E463.

The protein belongs to the aldehyde dehydrogenase family. In terms of assembly, dimer of dimers. Requires K(+) as cofactor.

The enzyme catalyses betaine aldehyde + NAD(+) + H2O = glycine betaine + NADH + 2 H(+). Its pathway is amine and polyamine biosynthesis; betaine biosynthesis via choline pathway; betaine from betaine aldehyde: step 1/1. Functionally, involved in the biosynthesis of the osmoprotectant glycine betaine. Catalyzes the irreversible oxidation of betaine aldehyde to the corresponding acid. The sequence is that of Betaine aldehyde dehydrogenase from Burkholderia multivorans (strain ATCC 17616 / 249).